Here is a 266-residue protein sequence, read N- to C-terminus: MSQQSRLANTFATARAEHRAALIGYLPAGYPDLAGSIATCRAMVESGCDIVEVGVAYSDPVMDGPTIQAAAEQALRGGVRVRDVFSVVEAITAAGGQAVVMSYWNPVLRYGVERFARDLAAAGGAGIITPNLIPEEADDWFIASATHNLDRIFLVAPSSTEERLVKTLEASRGFIYAASTMGVTGARDAVSSAAPALCARIRAHSDIPIGVGLGVRNGAQAAEIASYADGVIVGSALVSAAGEGLDAVRALTSELAEGVRSATVAS.

Active-site proton acceptor residues include glutamate 52 and aspartate 63.

It belongs to the TrpA family. As to quaternary structure, tetramer of two alpha and two beta chains.

It carries out the reaction (1S,2R)-1-C-(indol-3-yl)glycerol 3-phosphate + L-serine = D-glyceraldehyde 3-phosphate + L-tryptophan + H2O. It participates in amino-acid biosynthesis; L-tryptophan biosynthesis; L-tryptophan from chorismate: step 5/5. The alpha subunit is responsible for the aldol cleavage of indoleglycerol phosphate to indole and glyceraldehyde 3-phosphate. This Nocardia farcinica (strain IFM 10152) protein is Tryptophan synthase alpha chain.